Here is a 362-residue protein sequence, read N- to C-terminus: Chorismate synthase (362 aa).

NADP(+) is bound at residue Arg-47. FMN-binding positions include 124–126 (RSS), Gly-286, 301–305 (KPTAT), and Arg-327.

This sequence belongs to the chorismate synthase family. Homotetramer. FMNH2 serves as cofactor.

The catalysed reaction is 5-O-(1-carboxyvinyl)-3-phosphoshikimate = chorismate + phosphate. The protein operates within metabolic intermediate biosynthesis; chorismate biosynthesis; chorismate from D-erythrose 4-phosphate and phosphoenolpyruvate: step 7/7. Its function is as follows. Catalyzes the anti-1,4-elimination of the C-3 phosphate and the C-6 proR hydrogen from 5-enolpyruvylshikimate-3-phosphate (EPSP) to yield chorismate, which is the branch point compound that serves as the starting substrate for the three terminal pathways of aromatic amino acid biosynthesis. This reaction introduces a second double bond into the aromatic ring system. This Nostoc punctiforme (strain ATCC 29133 / PCC 73102) protein is Chorismate synthase.